The primary structure comprises 217 residues: Putative thymidylate synthase (217 aa).

The active site involves C139.

This sequence belongs to the thymidylate synthase family. Archaeal-type ThyA subfamily. In terms of assembly, monomer.

It localises to the cytoplasm. The protein operates within pyrimidine metabolism; dTTP biosynthesis. Its function is as follows. May catalyze the biosynthesis of dTMP using an unknown cosubstrate. This Methanosarcina barkeri (strain Fusaro / DSM 804) protein is Putative thymidylate synthase.